The following is a 74-amino-acid chain: QAIGPPFGLCFQCNQKTSSDCFNAKRCPPFHRTCYTLYKPDGGEEWAVKGCAKGCPTAGPDERVKCCHTPRCNN.

Gln1 is modified (pyrrolidone carboxylic acid). 5 cysteine pairs are disulfide-bonded: Cys10-Cys34, Cys13-Cys21, Cys27-Cys51, Cys55-Cys66, and Cys67-Cys72.

It belongs to the three-finger toxin family. Ancestral subfamily. Boigatoxin sub-subfamily. In terms of assembly, monomer. In terms of processing, the N-terminus is blocked. Contains 5 disulfide bonds. As to expression, expressed by the venom gland.

It localises to the secreted. In terms of biological role, reptile-specific three-finger toxin that is lethal at low doses for lizards, but not for mice. Probably acts as a neurotoxin. The chain is Fulgimotoxin from Oxybelis fulgidus (Green vine snake).